A 406-amino-acid chain; its full sequence is Argininosuccinate synthase (406 aa).

Residues 12 to 20 (AYSGGLDTS) and Ala-39 contribute to the ATP site. L-citrulline is bound by residues Tyr-90 and Ser-95. Gly-120 serves as a coordination point for ATP. L-aspartate contacts are provided by Thr-122, Asn-126, and Asp-127. Asn-126 is an L-citrulline binding site. 5 residues coordinate L-citrulline: Arg-130, Ser-179, Ser-188, Glu-264, and Tyr-276.

It belongs to the argininosuccinate synthase family. Type 1 subfamily. As to quaternary structure, homotetramer.

The protein localises to the cytoplasm. It carries out the reaction L-citrulline + L-aspartate + ATP = 2-(N(omega)-L-arginino)succinate + AMP + diphosphate + H(+). Its pathway is amino-acid biosynthesis; L-arginine biosynthesis; L-arginine from L-ornithine and carbamoyl phosphate: step 2/3. This Geotalea daltonii (strain DSM 22248 / JCM 15807 / FRC-32) (Geobacter daltonii) protein is Argininosuccinate synthase.